We begin with the raw amino-acid sequence, 300 residues long: Quinolinate synthase (300 aa).

Residues H23 and S40 each contribute to the iminosuccinate site. A [4Fe-4S] cluster-binding site is contributed by C85. Iminosuccinate contacts are provided by residues 111–113 (YIN) and S128. C171 contacts [4Fe-4S] cluster. Iminosuccinate-binding positions include 198 to 200 (HPE) and T215. Residue C258 coordinates [4Fe-4S] cluster.

The protein belongs to the quinolinate synthase family. Type 2 subfamily. [4Fe-4S] cluster is required as a cofactor.

It localises to the cytoplasm. The catalysed reaction is iminosuccinate + dihydroxyacetone phosphate = quinolinate + phosphate + 2 H2O + H(+). Its pathway is cofactor biosynthesis; NAD(+) biosynthesis; quinolinate from iminoaspartate: step 1/1. Its function is as follows. Catalyzes the condensation of iminoaspartate with dihydroxyacetone phosphate to form quinolinate. The protein is Quinolinate synthase of Clostridium novyi (strain NT).